Reading from the N-terminus, the 1088-residue chain is PAN2-PAN3 deadenylation complex catalytic subunit pan2 (1088 aa).

WD repeat units lie at residues 16–56 (VSTC…YTQF), 136–175 (HKDK…PVNK), 178–224 (AHTG…SLVP), and 270–309 (PLTS…SFSD). The interval 309–443 (DLKLPIQLPN…EDTISGPDSI (135 aa)) is linker. The USP domain maps to 443–814 (IPKFYQRPVI…IPIIVYYEKL (372 aa)). Residues 860–1033 (VGIDSEFVAL…EDALTALKLY (174 aa)) form the Exonuclease domain. Positions 863, 865, 972, and 1025 each coordinate a divalent metal cation.

This sequence belongs to the peptidase C19 family. PAN2 subfamily. As to quaternary structure, forms a heterotrimer with an asymmetric homodimer of the regulatory subunit ppk26/pan3 to form the poly(A)-nuclease (PAN) deadenylation complex. It depends on a divalent metal cation as a cofactor.

It localises to the cytoplasm. It catalyses the reaction Exonucleolytic cleavage of poly(A) to 5'-AMP.. With respect to regulation, positively regulated by the regulatory subunit ppk26/pan3. Functionally, catalytic subunit of the poly(A)-nuclease (PAN) deadenylation complex, one of two cytoplasmic mRNA deadenylases involved in mRNA turnover. PAN specifically shortens poly(A) tails of RNA and the activity is stimulated by poly(A)-binding protein pab1. PAN deadenylation is followed by rapid degradation of the shortened mRNA tails by the CCR4-NOT complex. Deadenylated mRNAs are then degraded by two alternative mechanisms, namely exosome-mediated 3'-5' exonucleolytic degradation, or deadenylation-dependent mRNA decaping and subsequent 5'-3' exonucleolytic degradation by xrn1. May also be involved in post-transcriptional maturation of mRNA poly(A) tails. The polypeptide is PAN2-PAN3 deadenylation complex catalytic subunit pan2 (Schizosaccharomyces pombe (strain 972 / ATCC 24843) (Fission yeast)).